Consider the following 486-residue polypeptide: UDP-N-acetylmuramate--L-alanine ligase (486 aa).

Gly-123–Thr-129 contributes to the ATP binding site.

It belongs to the MurCDEF family.

The protein localises to the cytoplasm. The catalysed reaction is UDP-N-acetyl-alpha-D-muramate + L-alanine + ATP = UDP-N-acetyl-alpha-D-muramoyl-L-alanine + ADP + phosphate + H(+). The protein operates within cell wall biogenesis; peptidoglycan biosynthesis. Its function is as follows. Cell wall formation. The chain is UDP-N-acetylmuramate--L-alanine ligase from Pseudomonas syringae pv. syringae (strain B728a).